Reading from the N-terminus, the 379-residue chain is C-C chemokine receptor type 7 (379 aa).

The first 24 residues, 1-24, serve as a signal peptide directing secretion; that stretch reads MDLGKPMKNVLVVALLVIFQVCLC. Residues 25 to 59 lie on the Extracellular side of the membrane; sequence QDEVTDNYIGDNTTVDYTLYESVCFKKDVRNFKAW. The N-linked (GlcNAc...) asparagine glycan is linked to N36. A helical membrane pass occupies residues 60–86; that stretch reads FLPIMYSIICFVGLLGNGLVMLTYIYF. Residues 87–95 lie on the Cytoplasmic side of the membrane; the sequence is KRLKTMTDT. A helical membrane pass occupies residues 96–116; it reads YLLNLALADILFLLTLPFWAY. Residues 117 to 130 are Extracellular-facing; it reads SAAKSWVFGVHVCK. Residues C129 and C210 are joined by a disulfide bond. Residues 131-152 form a helical membrane-spanning segment; it reads LIFGIYKISFFSGMLLLLCISI. At 153–170 the chain is on the cytoplasmic side; that stretch reads DRYVAIVQAVSAHRHRAR. A helical transmembrane segment spans residues 171–191; sequence VLLISKLSCLGIWMLAIVLST. Residues 192-219 are Extracellular-facing; that stretch reads PEVMYSGIQKSSSEQALRCSLVTEHVEA. A helical transmembrane segment spans residues 220–247; sequence LITIQVAQMVVGFLIPLMAMSFCYLVII. At 248–263 the chain is on the cytoplasmic side; that stretch reads RTLLQARNFERNKAIK. Residues 264-289 traverse the membrane as a helical segment; sequence VIIAVVVVFVAFQLPYNGVVLAHTVA. The Extracellular segment spans residues 290 to 314; the sequence is NFNITSGTSCELSKQLNIAYDVTYS. A glycan (N-linked (GlcNAc...) asparagine) is linked at N292. The helical transmembrane segment at 315–332 threads the bilayer; the sequence is LACVRCCVNPFLYAFIGV. The Cytoplasmic segment spans residues 333-379; the sequence is KFRSDLFKLFKDLGCLSQEQLRQWSFCRHTRRSSMSVEAETTTTFSP.

It belongs to the G-protein coupled receptor 1 family.

Its subcellular location is the cell membrane. Functionally, receptor for the MIP-3-beta chemokine. The polypeptide is C-C chemokine receptor type 7 (CCR7) (Bos taurus (Bovine)).